A 421-amino-acid chain; its full sequence is UDP-N-acetylglucosamine 1-carboxyvinyltransferase (421 aa).

22-23 (KN) is a binding site for phosphoenolpyruvate. Position 93 (Arg93) interacts with UDP-N-acetyl-alpha-D-glucosamine. Catalysis depends on Cys117, which acts as the Proton donor. A 2-(S-cysteinyl)pyruvic acid O-phosphothioketal modification is found at Cys117. UDP-N-acetyl-alpha-D-glucosamine contacts are provided by residues 122 to 126 (RPVDL), Asp308, and Ile330.

It belongs to the EPSP synthase family. MurA subfamily.

It localises to the cytoplasm. The enzyme catalyses phosphoenolpyruvate + UDP-N-acetyl-alpha-D-glucosamine = UDP-N-acetyl-3-O-(1-carboxyvinyl)-alpha-D-glucosamine + phosphate. It functions in the pathway cell wall biogenesis; peptidoglycan biosynthesis. Its function is as follows. Cell wall formation. Adds enolpyruvyl to UDP-N-acetylglucosamine. The chain is UDP-N-acetylglucosamine 1-carboxyvinyltransferase from Pseudomonas syringae pv. tomato (strain ATCC BAA-871 / DC3000).